Consider the following 115-residue polypeptide: Con-Ins G1a (115 aa).

The N-terminal stretch at M1–G24 is a signal peptide. A propeptide spanning residues N25–R29 is cleaved from the precursor. P34 carries the 4-hydroxyproline; partial modification. 3 disulfides stabilise this stretch: C38–C101, C50–C114, and C100–C105. E41 is subject to 4-carboxyglutamate. Positions K53 to R94 are cleaved as a propeptide — c peptide. Residue E98 is modified to 4-carboxyglutamate. Residue P104 is modified to 4-hydroxyproline; partial. Residue E109 is modified to 4-carboxyglutamate; partial. C114 carries the cysteine amide modification.

The protein belongs to the insulin family. Heterodimer of A and B chains; disulfide-linked. Expressed by the venom gland.

The protein resides in the secreted. Its function is as follows. This venom insulin, from a fish-hunting cone snail, facilitates prey capture by rapidly inducing hypoglycemic shock. It is one of the smallest known insulin found in nature and lacks the C-terminal segment of the B chain that, in human insulin, mediates engagement of the insulin receptor (INSR) and assembly of the hormone's hexameric storage form. Despite lacking this segment, it both binds and activates human insulin receptor (long isoform (HIR-B)) with a high potency (EC(50)=16.28 nM). In vivo, intraperitoneal injection of this peptide into zebrafish lowers blood glucose with the same potency than human insulin. In addition, when applied to water, this peptide reduces overall locomotor activity of zebrafish larvae, observed as a significant decrease in the percentage of time spent swimming and movement frequency. When tested on a mouse model of diabetes, this insulin also lowers blood glucose with a 10-fold lower potency than human insulin. This Conus geographus (Geography cone) protein is Con-Ins G1a.